Reading from the N-terminus, the 434-residue chain is UPF0597 protein CLB_1949 (434 aa).

This sequence belongs to the UPF0597 family.

The protein is UPF0597 protein CLB_1949 of Clostridium botulinum (strain ATCC 19397 / Type A).